We begin with the raw amino-acid sequence, 162 residues long: Inner membrane protein YbjO (162 aa).

Topologically, residues 1-23 (MEDETLGFFKKTSSSHARLNVPA) are periplasmic. Residues 24 to 44 (LVQVAALAIIMIRGLDVLMIF) traverse the membrane as a helical segment. The Cytoplasmic segment spans residues 45–66 (NTLGVRGIGEFIHRSVQTWSLT). A helical transmembrane segment spans residues 67–87 (LVFLSSLVLVFIEIWCAFSLV). Residues 88–94 (KGRRWAR) lie on the Periplasmic side of the membrane. Residues 95–115 (WLYLLTQITAASYLWAASLGY) traverse the membrane as a helical segment. The Cytoplasmic segment spans residues 116-162 (GYPELFSIPGESKREIFHSLMLQKLPDMLILMLLFVPSTSRRFFQLQ).

Its subcellular location is the cell inner membrane. This chain is Inner membrane protein YbjO (ybjO), found in Escherichia coli O157:H7.